A 175-amino-acid polypeptide reads, in one-letter code: NADH-ubiquinone oxidoreductase chain 6 (175 aa).

The next 6 membrane-spanning stretches (helical) occupy residues 1-21 (MMAY…VGFS), 25-45 (SPIY…GIVM), 47-67 (FGGS…MLVV), 87-107 (AAVL…VLYV), 116-136 (VFNF…FGVF), and 149-169 (YGVW…LVIL).

Belongs to the complex I subunit 6 family. As to quaternary structure, core subunit of respiratory chain NADH dehydrogenase (Complex I) which is composed of 45 different subunits.

The protein resides in the mitochondrion inner membrane. The catalysed reaction is a ubiquinone + NADH + 5 H(+)(in) = a ubiquinol + NAD(+) + 4 H(+)(out). Its function is as follows. Core subunit of the mitochondrial membrane respiratory chain NADH dehydrogenase (Complex I) which catalyzes electron transfer from NADH through the respiratory chain, using ubiquinone as an electron acceptor. Essential for the catalytic activity and assembly of complex I. The protein is NADH-ubiquinone oxidoreductase chain 6 (MT-ND6) of Ceratotherium simum (White rhinoceros).